The primary structure comprises 394 residues: Protein STRICTOSIDINE SYNTHASE-LIKE 1 (394 aa).

A signal peptide spans 1 to 21; the sequence is MESLLLIAYAFLYLFLLSHEA. The segment covering 61-73 has biased composition (basic and acidic residues); sequence GLEKRPNHSEDNP. The disordered stretch occupies residues 61 to 92; sequence GLEKRPNHSEDNPPSRGWTGEPGLDPRGEGPY. N-linked (GlcNAc...) asparagine glycans are attached at residues Asn-67, Asn-122, and Asn-196.

This sequence belongs to the strictosidine synthase family.

It is found in the vacuole. The chain is Protein STRICTOSIDINE SYNTHASE-LIKE 1 from Arabidopsis thaliana (Mouse-ear cress).